The following is a 403-amino-acid chain: MSHRKFSAPRHGSLGFLPRKRSSRHRGKVKSFPKDDPSKPVHLTAFLGYKAGMTHIVREVDRPGSKVNKKEVVEAVTIVETPPMVVVGIVGYVETPRGLRTFKTVFAEHISDECKRRFYKNWHKSKKKAFTKYCKKWQDEDGKKQLEKDFSSMKKYCQVIRVIAHTQMRLLPLRQKKAHLMEIQVNGGTVAEKLDWARERLEQQVPVNQVFGQDEMIDVIGVTKGKGYKGVTSRWHTKKLPRKTHRGLRKVACIGAWHPARVAFSVARAGQKGYHHRTEINKKIYKIGQGYLIKDGKLIKNNASTDYDLSDKSINPLGGFVHYGEVTNDFVMLKGCVVGTKKRVLTLRKSLLVQTKRRALEKIDLKFIDTTSKFGHGRFQTMEEKKAFMGPLKKDRIAKEEGA.

Positions 1–37 (MSHRKFSAPRHGSLGFLPRKRSSRHRGKVKSFPKDDP) are disordered. Ser-13 bears the Phosphoserine mark. Over residues 18 to 31 (PRKRSSRHRGKVKS) the composition is skewed to basic residues. Lys-39 participates in a covalent cross-link: Glycyl lysine isopeptide (Lys-Gly) (interchain with G-Cter in SUMO2). Lys-136 is subject to N6-acetyllysine. Glycyl lysine isopeptide (Lys-Gly) (interchain with G-Cter in SUMO2) cross-links involve residues Lys-224 and Lys-226. Residue His-245 is modified to Tele-methylhistidine. An N6-acetyllysine; alternate mark is found at Lys-286 and Lys-294. A Glycyl lysine isopeptide (Lys-Gly) (interchain with G-Cter in SUMO2); alternate cross-link involves residue Lys-286. Lys-294 is covalently cross-linked (Glycyl lysine isopeptide (Lys-Gly) (interchain with G-Cter in SUMO1); alternate). Position 304 is a phosphoserine (Ser-304). N6-acetyllysine; alternate is present on Lys-366. A Glycyl lysine isopeptide (Lys-Gly) (interchain with G-Cter in SUMO2); alternate cross-link involves residue Lys-366. Lys-373 bears the N6-acetyllysine mark. Glycyl lysine isopeptide (Lys-Gly) (interchain with G-Cter in SUMO2) cross-links involve residues Lys-386, Lys-393, and Lys-399.

This sequence belongs to the universal ribosomal protein uL3 family. In terms of assembly, component of the large ribosomal subunit. Interacts with DHX33. In terms of processing, constitutively monomethylated at His-245 by METTL18. Methylation at His-245 regulates translation elongation by slowing ribosome traversal on tyrosine codons: slower elongation provides enough time for proper folding of synthesized proteins and prevents cellular aggregation of tyrosine-rich proteins. It is not required for incorporation of RPL3 into ribosomes.

It is found in the nucleus. The protein localises to the nucleolus. The protein resides in the cytoplasm. Its function is as follows. Component of the large ribosomal subunit. The ribosome is a large ribonucleoprotein complex responsible for the synthesis of proteins in the cell. This chain is Large ribosomal subunit protein uL3 (RPL3), found in Homo sapiens (Human).